The following is a 68-amino-acid chain: Small ribosomal subunit protein bS21 (68 aa).

Belongs to the bacterial ribosomal protein bS21 family.

The polypeptide is Small ribosomal subunit protein bS21 (Ruegeria pomeroyi (strain ATCC 700808 / DSM 15171 / DSS-3) (Silicibacter pomeroyi)).